The chain runs to 329 residues: Ribosomal RNA small subunit methyltransferase H (329 aa).

Residues 34–36, Asp-52, Phe-79, Asp-100, and Gln-107 each bind S-adenosyl-L-methionine; that span reads GGY. The interval 285–329 is disordered; it reads GEDEVAHNPRARSAKLRAAERTSAPAHKDDQSSSWPRLSDVMRGG.

It belongs to the methyltransferase superfamily. RsmH family.

It localises to the cytoplasm. The catalysed reaction is cytidine(1402) in 16S rRNA + S-adenosyl-L-methionine = N(4)-methylcytidine(1402) in 16S rRNA + S-adenosyl-L-homocysteine + H(+). Specifically methylates the N4 position of cytidine in position 1402 (C1402) of 16S rRNA. The polypeptide is Ribosomal RNA small subunit methyltransferase H (Bradyrhizobium diazoefficiens (strain JCM 10833 / BCRC 13528 / IAM 13628 / NBRC 14792 / USDA 110)).